The chain runs to 971 residues: Oncostatin-M-specific receptor subunit beta (971 aa).

The first 23 residues, 1–23 (MAFSVVLHPAFLLAVLSLRASRS), serve as a signal peptide directing secretion. Residues 24–737 (EVLEEPLPLT…VTTPDARSHM (714 aa)) are Extracellular-facing. Residues Asn74, Asn97, Asn130, Asn162, and Asn239 are each glycosylated (N-linked (GlcNAc...) asparagine). Cys242 and Cys252 are disulfide-bonded. N-linked (GlcNAc...) asparagine glycans are attached at residues Asn271, Asn304, Asn323, and Asn377. Fibronectin type-III domains follow at residues 332–425 (APQD…TPET), 427–523 (PSQA…SNDS), 524–620 (GHEE…TQEL), and 622–733 (PLVN…TPDA). Positions 412–416 (WSDWT) match the WSXWS motif motif. N-linked (GlcNAc...) asparagine glycans are attached at residues Asn491, Asn541, Asn577, Asn689, and Asn722. Residues 738–758 (LLQIILPMTLCVLLSIIVCYW) traverse the membrane as a helical segment. The Cytoplasmic portion of the chain corresponds to 759 to 971 (KSQWVKEKCY…STVLLGQGEQ (213 aa)). Residues 767 to 775 (CYPDIPNPY) carry the Box 1 motif motif. The interval 949–971 (LASPSLKEDNSLTSTVLLGQGEQ) is disordered. Polar residues predominate over residues 959-971 (SLTSTVLLGQGEQ).

This sequence belongs to the type I cytokine receptor family. Type 2 subfamily. In terms of assembly, heterodimer composed of OSMR and IL6ST (type II OSM receptor). Heterodimer with IL31RA to form the IL31 receptor. As to expression, widely expressed. Expressed at highest levels in the lung, heart, thymus and spleen. Expressed in dorsal root ganglia.

The protein localises to the membrane. Its function is as follows. Associates with IL31RA to form the IL31 receptor. Binds IL31 to activate STAT3 and possibly STAT1 and STAT5. Capable of transducing OSM-specific signaling events. This chain is Oncostatin-M-specific receptor subunit beta (Osmr), found in Mus musculus (Mouse).